Here is an 87-residue protein sequence, read N- to C-terminus: MARVTVEDCLEHVDNRFELVMLSTKRARQLATGGKEPRVAWENDKPTVVALREIAEGIVTNEFIAAEEIVTEDPVFAAFEDESNEAV.

The protein belongs to the RNA polymerase subunit omega family. As to quaternary structure, the RNAP catalytic core consists of 2 alpha, 1 beta, 1 beta' and 1 omega subunit. When a sigma factor is associated with the core the holoenzyme is formed, which can initiate transcription.

It catalyses the reaction RNA(n) + a ribonucleoside 5'-triphosphate = RNA(n+1) + diphosphate. Promotes RNA polymerase assembly. Latches the N- and C-terminal regions of the beta' subunit thereby facilitating its interaction with the beta and alpha subunits. This Pseudomonas putida (strain W619) protein is DNA-directed RNA polymerase subunit omega.